The sequence spans 63 residues: Protein D-63 (63 aa).

Homodimer.

Functionally, this protein may be involved in virus assembly. The polypeptide is Protein D-63 (Saccharolobus solfataricus (Sulfolobus solfataricus)).